A 211-amino-acid polypeptide reads, in one-letter code: LexA repressor (211 aa).

The segment at residues 27–47 (QTEIARAFGFKGVRAVQHHLD) is a DNA-binding region (H-T-H motif). Catalysis depends on for autocatalytic cleavage activity residues S131 and K168.

It belongs to the peptidase S24 family. As to quaternary structure, homodimer.

It carries out the reaction Hydrolysis of Ala-|-Gly bond in repressor LexA.. Represses a number of genes involved in the response to DNA damage (SOS response), including recA and lexA. In the presence of single-stranded DNA, RecA interacts with LexA causing an autocatalytic cleavage which disrupts the DNA-binding part of LexA, leading to derepression of the SOS regulon and eventually DNA repair. The chain is LexA repressor from Xylella fastidiosa (strain 9a5c).